The sequence spans 370 residues: Formate dehydrogenase (370 aa).

2 residues coordinate substrate: isoleucine 94 and asparagine 120. Residues 175-176 (RI), aspartate 196, 231-235 (PLHES), threonine 257, aspartate 283, and 312-315 (HMSG) each bind NAD(+).

This sequence belongs to the D-isomer specific 2-hydroxyacid dehydrogenase family. FDH subfamily. In terms of assembly, homodimer.

It is found in the cytoplasm. The enzyme catalyses formate + NAD(+) = CO2 + NADH. Its function is as follows. Catalyzes the NAD(+)-dependent oxidation of formate to carbon dioxide. Formate oxidation is the final step in the methanol oxidation pathway in methylotrophic microorganisms. Has a role in the detoxification of exogenous formate in non-methylotrophic organisms. The protein is Formate dehydrogenase of Chaetomium thermophilum (strain DSM 1495 / CBS 144.50 / IMI 039719) (Thermochaetoides thermophila).